Here is a 100-residue protein sequence, read N- to C-terminus: Urease subunit gamma (100 aa).

It belongs to the urease gamma subunit family. As to quaternary structure, heterotrimer of UreA (gamma), UreB (beta) and UreC (alpha) subunits. Three heterotrimers associate to form the active enzyme.

It is found in the cytoplasm. It catalyses the reaction urea + 2 H2O + H(+) = hydrogencarbonate + 2 NH4(+). Its pathway is nitrogen metabolism; urea degradation; CO(2) and NH(3) from urea (urease route): step 1/1. In Marinobacter nauticus (strain ATCC 700491 / DSM 11845 / VT8) (Marinobacter aquaeolei), this protein is Urease subunit gamma.